The following is a 512-amino-acid chain: FACT complex subunit pob3 (512 aa).

Acidic residues predominate over residues 460–504 (LDDEDEEGDEEMEEALSEDEDFQAESESDVAEEYDENAESSDEEG). Residues 460–512 (LDDEDEEGDEEMEEALSEDEDFQAESESDVAEEYDENAESSDEEGASGAEGSE) form a disordered region.

Belongs to the SSRP1 family. As to quaternary structure, forms a stable heterodimer with spt16. The spt16-pob3 dimer weakly associates with multiple molecules of nhp6 to form the FACT complex. Interacts with abo1.

Its subcellular location is the nucleus. The protein resides in the chromosome. In terms of biological role, component of the FACT complex, a general chromatin factor that acts to reorganize nucleosomes. The FACT complex is involved in multiple processes that require DNA as a template such as mRNA elongation, DNA replication and DNA repair. During transcription elongation the FACT complex acts as a histone chaperone that both destabilizes and restores nucleosomal structure. It facilitates the passage of RNA polymerase II and transcription by promoting the dissociation of one histone H2A-H2B dimer from the nucleosome, then subsequently promotes the reestablishment of the nucleosome following the passage of RNA polymerase II. The polypeptide is FACT complex subunit pob3 (Schizosaccharomyces pombe (strain 972 / ATCC 24843) (Fission yeast)).